The sequence spans 282 residues: Transcription repressor OFP18 (282 aa).

Positions 1–85 (MVRKMKLPFL…YSSFSSTSHA (85 aa)) are disordered. Residues 15–35 (SSSSFSSNSSSSSSSWPWPSS) show a composition bias toward low complexity. A compositionally biased stretch (polar residues) spans 36–47 (HQQNLKTISSKA). Positions 66–85 (SFSSSPSSSSYSSFSSTSHA) are enriched in low complexity. The OVATE domain occupies 139-199 (LSLESNDPYT…FAAFVDLVLN (61 aa)).

Expressed in roots and shoots.

The protein localises to the nucleus. Its function is as follows. Transcriptional repressor that regulates multiple aspects of plant growth and development through the regulation of BEL1-LIKE (BLH) and KNOX TALE (KNAT) homeodomain transcription factors. The sequence is that of Transcription repressor OFP18 (OFP18) from Arabidopsis thaliana (Mouse-ear cress).